A 1285-amino-acid polypeptide reads, in one-letter code: Ataxin-2 (1285 aa).

Disordered regions lie at residues 1–85, 111–178, and 197–224; these read MRSS…PGSR, ARAC…SPGA, and PVAS…GLPQ. Over residues 29–38 the composition is skewed to basic residues; sequence SLPRTARRGG. A compositionally biased stretch (pro residues) spans 48–65; that stretch reads AGPPPRGPGAPPRGPRSP. Low complexity predominate over residues 128 to 144; the sequence is SSSARPAPGCPRPACEP. The span at 205–214 shows a compositional bias: gly residues; the sequence is AGGGRPGLGR. Phosphoserine occurs at positions 218 and 219. The 78-residue stretch at 237–314 folds into the Sm domain; the sequence is RMVHILTSVV…FVVVQFKDTD (78 aa). Ser362 and Ser435 each carry phosphoserine. 2 stretches are compositionally biased toward basic and acidic residues: residues 428-440 and 447-461; these read ALEN…EEKY and CSDR…RDNK. Disordered stretches follow at residues 428 to 925 and 1111 to 1191; these read ALEN…HQQP and AALH…QSSF. Ser477 carries the phosphoserine modification. Residues 498–510 are compositionally biased toward polar residues; sequence ASHTSDFNPNAGS. Position 523 is a phosphoserine (Ser523). Residues 526 to 552 show a composition bias toward low complexity; that stretch reads PSHSSRPPSRYQSGPNSLPPRAATHTR. Pro residues predominate over residues 554-567; sequence PSRPPSRPSRPPSH. The residue at position 593 (Ser593) is a Phosphoserine. A compositionally biased stretch (basic residues) spans 596–606; sequence AQRHPRNHRVS. Position 609 is an asymmetric dimethylarginine; alternate (Arg609). Arg609 bears the Omega-N-methylarginine; alternate mark. Residues Ser611 and Ser653 each carry the phosphoserine modification. Residues 662–672 show a composition bias toward polar residues; it reads PRQSSIGNSPS. The span at 685 to 694 shows a compositional bias: low complexity; sequence PAEAVSMPVP. Ser697 is subject to Phosphoserine. Thr710 is subject to Phosphothreonine. Over residues 737–746 the composition is skewed to polar residues; that stretch reads ASETSPSFSK. Phosphoserine occurs at positions 741 and 753. Residues 757–773 are compositionally biased toward basic and acidic residues; it reads SEHRKQIDDLKKFKNDF. Residues 776 to 789 are compositionally biased toward polar residues; the sequence is QPSSTSESMDQLLS. A compositionally biased stretch (basic and acidic residues) spans 790 to 813; the sequence is KNREGEKSRDLIKDKTEASAKDSF. The segment covering 814–838 has biased composition (low complexity); that stretch reads IDSSSSSSNCTSGSSKTNSPSISPS. Phosphoserine occurs at positions 827, 828, 832, 836, 838, 859, and 860. Residues 851–862 are compositionally biased toward polar residues; that stretch reads VTSQGVQTSSPA. Residue Lys864 forms a Glycyl lysine isopeptide (Lys-Gly) (interchain with G-Cter in SUMO2) linkage. Residues 864–881 show a composition bias toward basic and acidic residues; it reads KQEKDDREEKKDTTEQVR. Composition is skewed to low complexity over residues 896-907 and 1128-1165; these read SFSQPKPSTTPT and GQQQ…QQSA.

This sequence belongs to the ataxin-2 family. In terms of assembly, interacts with RBFOX1. Monomer. Can also form homodimers. Interacts with polyribosomes. Interacts with EGFR. Interacts with SH3GL3. Interacts with SH3GL2, SH3KBP1 and CBL. Interacts with ATXN2L. Expressed in the heart, lung, liver, kidney, skeletal muscle, spleen and intestine. Predominant expression was seen in the brain where a high level expression was found in the pyramidal cortical neurons, large brain stem neurons and cerebellar Purkinje cells. All three isoforms were found in all the tissues except skeletal muscle where only isoform 1 was found.

It localises to the cytoplasm. In terms of biological role, involved in EGFR trafficking, acting as negative regulator of endocytic EGFR internalization at the plasma membrane. This Mus musculus (Mouse) protein is Ataxin-2 (Atxn2).